We begin with the raw amino-acid sequence, 2890 residues long: Bifunctional DNA-directed RNA polymerase subunit beta-beta' (2890 aa).

The DNA-directed RNA polymerase subunit beta stretch occupies residues 1–1377 (MSKKIPLKNR…DINIFGDDVD (1377 aa)). The segment at 1384-2890 (PIMIKEDDRP…LRALEDNSKF (1507 aa)) is DNA-directed RNA polymerase subunit beta'. Zn(2+) is bound by residues Cys-1449, Cys-1451, Cys-1465, and Cys-1468. Mg(2+) is bound by residues Asp-1849, Asp-1851, and Asp-1853. Zn(2+)-binding residues include Cys-2179, Cys-2253, Cys-2260, and Cys-2263.

The protein in the N-terminal section; belongs to the RNA polymerase beta chain family. This sequence in the C-terminal section; belongs to the RNA polymerase beta' chain family. In terms of assembly, the RNAP catalytic core consists of 2 alpha, 1 beta/beta' and 1 omega subunit. When a sigma factor is associated with the core the holoenzyme is formed, which can initiate transcription. It depends on Mg(2+) as a cofactor. Zn(2+) is required as a cofactor.

The enzyme catalyses RNA(n) + a ribonucleoside 5'-triphosphate = RNA(n+1) + diphosphate. In terms of biological role, DNA-dependent RNA polymerase catalyzes the transcription of DNA into RNA using the four ribonucleoside triphosphates as substrates. This is Bifunctional DNA-directed RNA polymerase subunit beta-beta' (rpoBC) from Helicobacter pylori (strain J99 / ATCC 700824) (Campylobacter pylori J99).